A 232-amino-acid chain; its full sequence is Large ribosomal subunit protein uL1 (232 aa).

Belongs to the universal ribosomal protein uL1 family. As to quaternary structure, part of the 50S ribosomal subunit.

Its function is as follows. Binds directly to 23S rRNA. The L1 stalk is quite mobile in the ribosome, and is involved in E site tRNA release. Functionally, protein L1 is also a translational repressor protein, it controls the translation of the L11 operon by binding to its mRNA. The protein is Large ribosomal subunit protein uL1 of Cereibacter sphaeroides (strain ATCC 17029 / ATH 2.4.9) (Rhodobacter sphaeroides).